Here is a 276-residue protein sequence, read N- to C-terminus: MKFIFEKYYRHPINKYNGSKITPISQKNIFVVIKVELDDNELNNIHDEAKKLAEDVCEKNPSGDIRTEERKLLSSFCGLIAEKVVKQLITEKLMLIKDYIEIKGANVSNENFNYESHNDIEIHLSNDEIITIEIRSSIATKYDLNDILNKDFDILGSYTTSYKSKEHNKDYYFRIIFHNPGDYGYNPHLKKWEYNKRLENAFKQEKNKALDYFKNNVKVYFVGGCTFDDLENYGEHDDLKQKNAEYWIIRPITKGRDVLEILEILEKDILNKLGFL.

This is an uncharacterized protein from Methanocaldococcus jannaschii (strain ATCC 43067 / DSM 2661 / JAL-1 / JCM 10045 / NBRC 100440) (Methanococcus jannaschii).